The following is a 590-amino-acid chain: UvrABC system protein C (590 aa).

The 78-residue stretch at 14 to 91 (DQPGCYLMKD…IKKYDPKYNV (78 aa)) folds into the GIY-YIG domain. Positions 196 to 231 (NEVKKELEAKMLEASENLQFERAKEFRDQIAHIEST) constitute a UVR domain.

The protein belongs to the UvrC family. In terms of assembly, interacts with UvrB in an incision complex.

It localises to the cytoplasm. Its function is as follows. The UvrABC repair system catalyzes the recognition and processing of DNA lesions. UvrC both incises the 5' and 3' sides of the lesion. The N-terminal half is responsible for the 3' incision and the C-terminal half is responsible for the 5' incision. The polypeptide is UvrABC system protein C (Bacillus licheniformis (strain ATCC 14580 / DSM 13 / JCM 2505 / CCUG 7422 / NBRC 12200 / NCIMB 9375 / NCTC 10341 / NRRL NRS-1264 / Gibson 46)).